The sequence spans 86 residues: Weak toxin 3 (86 aa).

A signal peptide spans methionine 1–threonine 23. 5 disulfides stabilise this stretch: cysteine 24–cysteine 45, cysteine 27–cysteine 32, cysteine 38–cysteine 63, cysteine 67–cysteine 78, and cysteine 79–cysteine 84.

This sequence belongs to the three-finger toxin family. Ancestral subfamily. Orphan group II sub-subfamily. As to expression, expressed by the venom gland.

It is found in the secreted. Binds with low affinity to muscular (alpha-1-beta-1-delta-epsilon/CHRNA1-CHRNB1-CHRND-CHRNE) and very low affinity to neuronal (alpha-7/CHRNA7) nicotinic acetylcholine receptor (nAChR). This chain is Weak toxin 3, found in Bungarus candidus (Malayan krait).